A 193-amino-acid polypeptide reads, in one-letter code: Rho-related protein racB (193 aa).

Positions 13, 15, 16, 17, 18, 32, 35, 60, 116, 118, and 159 each coordinate GTP. Residue Thr17 coordinates Mg(2+). 2 short sequence motifs (switch) span residues 26–37 and 57–75; these read NAFPTEYVPTVF and DTAGQEDYDRIRPLSYPQT. Mg(2+) is bound at residue Thr35. At Cys190 the chain carries Cysteine methyl ester. The S-geranylgeranyl cysteine moiety is linked to residue Cys190. Positions 191–193 are cleaved as a propeptide — removed in mature form; that stretch reads LIF.

Belongs to the small GTPase superfamily. Rho family. Mg(2+) is required as a cofactor.

Its subcellular location is the cell membrane. It localises to the cytoplasm. The protein localises to the cytoskeleton. The enzyme catalyses GTP + H2O = GDP + phosphate + H(+). Regulated by guanine nucleotide exchange factors (GEFs) which promote the exchange of bound GDP for free GTP, GTPase activating proteins (GAPs) which increase the GTP hydrolysis activity, and GDP dissociation inhibitors which inhibit the dissociation of the nucleotide from the GTPase. Small GTPase which cycles between active GTP-bound and inactive GDP-bound states. In Entamoeba histolytica (strain ATCC 30459 / HM-1:IMSS / ABRM), this protein is Rho-related protein racB.